A 427-amino-acid chain; its full sequence is Adenylosuccinate synthetase (427 aa).

GTP-binding positions include 12–18 and 40–42; these read GDEGKGK and GHT. Asp-13 acts as the Proton acceptor in catalysis. Residues Asp-13 and Gly-40 each contribute to the Mg(2+) site. Residues 13–16, 38–41, Thr-130, Arg-144, Gln-224, Thr-239, and Arg-303 contribute to the IMP site; these read DEGK and NAGH. Catalysis depends on His-41, which acts as the Proton donor. Position 299–305 (299–305) interacts with substrate; the sequence is VTTGRAR. GTP-binding positions include Arg-305, 331-333, and 413-415; these read KID and SVG.

The protein belongs to the adenylosuccinate synthetase family. Homodimer. It depends on Mg(2+) as a cofactor.

Its subcellular location is the cytoplasm. It carries out the reaction IMP + L-aspartate + GTP = N(6)-(1,2-dicarboxyethyl)-AMP + GDP + phosphate + 2 H(+). Its pathway is purine metabolism; AMP biosynthesis via de novo pathway; AMP from IMP: step 1/2. Functionally, plays an important role in the de novo pathway of purine nucleotide biosynthesis. Catalyzes the first committed step in the biosynthesis of AMP from IMP. The sequence is that of Adenylosuccinate synthetase from Clostridium novyi (strain NT).